Reading from the N-terminus, the 142-residue chain is Large ribosomal subunit protein uL16 (142 aa).

Residues 1–14 (MLSPRRTKFRKQQR) are compositionally biased toward basic residues. A disordered region spans residues 1–22 (MLSPRRTKFRKQQRGRMTGKAT).

The protein belongs to the universal ribosomal protein uL16 family. As to quaternary structure, part of the 50S ribosomal subunit.

Its function is as follows. Binds 23S rRNA and is also seen to make contacts with the A and possibly P site tRNAs. This chain is Large ribosomal subunit protein uL16, found in Synechococcus elongatus (strain ATCC 33912 / PCC 7942 / FACHB-805) (Anacystis nidulans R2).